A 1404-amino-acid chain; its full sequence is DNA-directed RNA polymerase subunit beta' (1404 aa).

Zn(2+) contacts are provided by Cys-70, Cys-72, Cys-85, and Cys-88. Mg(2+) contacts are provided by Asp-460, Asp-462, and Asp-464. Positions 814, 888, 895, and 898 each coordinate Zn(2+).

It belongs to the RNA polymerase beta' chain family. As to quaternary structure, the RNAP catalytic core consists of 2 alpha, 1 beta, 1 beta' and 1 omega subunit. When a sigma factor is associated with the core the holoenzyme is formed, which can initiate transcription. Mg(2+) serves as cofactor. The cofactor is Zn(2+).

The catalysed reaction is RNA(n) + a ribonucleoside 5'-triphosphate = RNA(n+1) + diphosphate. Functionally, DNA-dependent RNA polymerase catalyzes the transcription of DNA into RNA using the four ribonucleoside triphosphates as substrates. The protein is DNA-directed RNA polymerase subunit beta' of Shewanella halifaxensis (strain HAW-EB4).